A 164-amino-acid polypeptide reads, in one-letter code: Putative 4-hydroxy-4-methyl-2-oxoglutarate aldolase (164 aa).

Substrate is bound by residues 74-77 (GGNL) and R96. Residue D97 participates in a divalent metal cation binding.

This sequence belongs to the class II aldolase/RraA-like family. As to quaternary structure, homotrimer. It depends on a divalent metal cation as a cofactor.

It catalyses the reaction 4-hydroxy-4-methyl-2-oxoglutarate = 2 pyruvate. The enzyme catalyses oxaloacetate + H(+) = pyruvate + CO2. Catalyzes the aldol cleavage of 4-hydroxy-4-methyl-2-oxoglutarate (HMG) into 2 molecules of pyruvate. Also contains a secondary oxaloacetate (OAA) decarboxylase activity due to the common pyruvate enolate transition state formed following C-C bond cleavage in the retro-aldol and decarboxylation reactions. In Thermus thermophilus (strain ATCC BAA-163 / DSM 7039 / HB27), this protein is Putative 4-hydroxy-4-methyl-2-oxoglutarate aldolase.